The chain runs to 1292 residues: Calcium-transporting ATPase 2 (1292 aa).

The segment at 1 to 105 (MPTYNDDDDS…EQASSKSSTS (105 aa)) is disordered. At 1 to 236 (MPTYNDDDDS…RLMLEAFKDK (236 aa)) the chain is on the cytoplasmic side. A compositionally biased stretch (polar residues) spans 23–41 (KPSSSQFLGVPSSNYNQRE). Positions 44-60 (SRSGSSTISREPSSSGT) are enriched in low complexity. Residues 68-78 (DSMKESYDKNK) show a composition bias toward basic and acidic residues. The helical transmembrane segment at 237–257 (VLILLSIAAVVSLALGLYQTF) threads the bilayer. Topologically, residues 258–273 (GQPPTLDPITGKPEPR) are vacuolar. Residues 274-294 (VEWVEGVAIMAAIVIVVTVGG) traverse the membrane as a helical segment. At 295 to 448 (VNDWQKELQF…QLRLSRVADA (154 aa)) the chain is on the cytoplasmic side. Residues 449–469 (IAKLGGAASALLFIVLLIEFL) traverse the membrane as a helical segment. Residues 470-488 (VRLKSNDSSSKNKGQEFLQ) lie on the Vacuolar side of the membrane. Residues 489–509 (ILIVSVTLLVVAVPEGLPLAV) form a helical membrane-spanning segment. 2 residues coordinate Ca(2+): valine 498 and glutamate 503. Topologically, residues 510–938 (TLALAFATNR…GRTVNDAVKK (429 aa)) are cytoplasmic. Aspartate 545 acts as the 4-aspartylphosphate intermediate in catalysis. Mg(2+) contacts are provided by aspartate 545 and threonine 547. Residues threonine 547, glutamate 638, lysine 691, arginine 736, 807 to 809 (TGD), arginine 856, and lysine 862 contribute to the ATP site. A Mg(2+)-binding site is contributed by aspartate 881. Asparagine 884 provides a ligand contact to ATP. A helical membrane pass occupies residues 939–959 (FLQFQITVNITAVFLTIISAV). Asparagine 947 provides a ligand contact to Ca(2+). Over 960–966 (ASTDQSS) the chain is Vacuolar. A helical membrane pass occupies residues 967-987 (VLTAVQLLWVNLIMDTLAALA). The Ca(2+) site is built by asparagine 977 and aspartate 981. Residues 988 to 1016 (LATDPPTPEVLKRKPEKPGASLFTFDMWK) are Cytoplasmic-facing. Residues 1017-1037 (MIICQSMYQLAVTLVLHFAGN) traverse the membrane as a helical segment. The Vacuolar segment spans residues 1038-1084 (SIFHYPSNTADMNTIVFNTFVWLQLFNEINNRRLDNKLNIFERINHN). The chain crosses the membrane as a helical span at residues 1085 to 1105 (FLFIAIFVIVAGIQVIIVFFG). Topologically, residues 1106 to 1115 (GAAFSVKRID) are cytoplasmic. Residues 1116-1136 (GKGWAISIVFGVISIPLGALI) form a helical membrane-spanning segment. At 1137–1292 (RCVPNNFLRK…ALDKKSSNVH (156 aa)) the chain is on the vacuolar side.

Belongs to the cation transport ATPase (P-type) (TC 3.A.3) family.

The protein localises to the vacuole membrane. It carries out the reaction Ca(2+)(in) + ATP + H2O = Ca(2+)(out) + ADP + phosphate + H(+). In terms of biological role, this magnesium-dependent enzyme catalyzes the hydrolysis of ATP coupled with the transport of calcium. Transports the calcium to the vacuole and participates in the control of the cytosolic free calcium. The polypeptide is Calcium-transporting ATPase 2 (pmc1) (Schizosaccharomyces pombe (strain 972 / ATCC 24843) (Fission yeast)).